Reading from the N-terminus, the 336-residue chain is uncharacterized protein (336 aa).

This sequence belongs to the GppA/Ppx family.

This is an uncharacterized protein from Streptomyces coelicolor (strain ATCC BAA-471 / A3(2) / M145).